A 327-amino-acid chain; its full sequence is Lipoyl synthase (327 aa).

[4Fe-4S] cluster contacts are provided by Cys-74, Cys-79, Cys-85, Cys-100, Cys-104, Cys-107, and Ser-314. The Radical SAM core domain maps to 86–303 (FSGGTATFMI…AEEGEKMGFK (218 aa)).

It belongs to the radical SAM superfamily. Lipoyl synthase family. The cofactor is [4Fe-4S] cluster.

It is found in the cytoplasm. The catalysed reaction is [[Fe-S] cluster scaffold protein carrying a second [4Fe-4S](2+) cluster] + N(6)-octanoyl-L-lysyl-[protein] + 2 oxidized [2Fe-2S]-[ferredoxin] + 2 S-adenosyl-L-methionine + 4 H(+) = [[Fe-S] cluster scaffold protein] + N(6)-[(R)-dihydrolipoyl]-L-lysyl-[protein] + 4 Fe(3+) + 2 hydrogen sulfide + 2 5'-deoxyadenosine + 2 L-methionine + 2 reduced [2Fe-2S]-[ferredoxin]. The protein operates within protein modification; protein lipoylation via endogenous pathway; protein N(6)-(lipoyl)lysine from octanoyl-[acyl-carrier-protein]: step 2/2. Catalyzes the radical-mediated insertion of two sulfur atoms into the C-6 and C-8 positions of the octanoyl moiety bound to the lipoyl domains of lipoate-dependent enzymes, thereby converting the octanoylated domains into lipoylated derivatives. The protein is Lipoyl synthase of Pseudomonas aeruginosa (strain LESB58).